The following is a 338-amino-acid chain: O-methyltransferase 4 (338 aa).

Gly184, Asp207, Asn230, Phe231, Lys244, and Arg245 together coordinate S-adenosyl-L-methionine. The Proton acceptor role is filled by His248.

It belongs to the class I-like SAM-binding methyltransferase superfamily. Cation-independent O-methyltransferase family. COMT subfamily.

It carries out the reaction (3,5-dichloro-2,4,6-trihydroxyphenyl)hexan-1-one + S-adenosyl-L-methionine = 1-(3,5-dichloro-2,6-dihydroxy-4-methoxyphenyl)hexan-1-one + S-adenosyl-L-homocysteine + H(+). This chain is O-methyltransferase 4 (omt4), found in Dictyostelium discoideum (Social amoeba).